The following is a 200-amino-acid chain: uncharacterized protein (200 aa).

This is an uncharacterized protein from Bacillus subtilis (strain 168).